The chain runs to 155 residues: MAPK regulated corepressor interacting protein 2 (155 aa).

An N-acetylmethionine modification is found at Met1. Residues 1–59 (MYTITKGPSKLVAQRRTGPTQQQVESRLGELLKCRHSAPTPQHPRAQPPGPWPLSSPGP) form a disordered region. Position 35 is an omega-N-methylarginine (Arg35). A compositionally biased stretch (pro residues) spans 46–56 (AQPPGPWPLSS). Ser56 carries the phosphoserine modification. Arg60 is subject to Omega-N-methylarginine. Ser77 is subject to Phosphoserine.

Belongs to the MCRIP family. As to quaternary structure, interacts with DDX6. Interacts with MCRIP1.

It is found in the cytoplasm. Its subcellular location is the stress granule. The protein resides in the nucleus. This is MAPK regulated corepressor interacting protein 2 (MCRIP2) from Bos taurus (Bovine).